The following is a 74-amino-acid chain: Toxin BmKaTx17 (74 aa).

The signal sequence occupies residues 1 to 8; sequence LLMTGVES. An LCN-type CS-alpha/beta domain is found at 10-72; the sequence is RDAYIAKNYN…KPIRIPGKCH (63 aa). Intrachain disulfides connect Cys20–Cys71, Cys24–Cys44, Cys30–Cys54, and Cys34–Cys56. The propeptide at 73–74 is removed by a carboxypeptidase; it reads RR.

This sequence belongs to the long (4 C-C) scorpion toxin superfamily. Sodium channel inhibitor family. Alpha subfamily. Expressed by the venom gland.

It localises to the secreted. Functionally, alpha toxins bind voltage-independently at site-3 of sodium channels (Nav) and inhibit the inactivation of the activated channels, thereby blocking neuronal transmission. This Olivierus martensii (Manchurian scorpion) protein is Toxin BmKaTx17.